The primary structure comprises 726 residues: Catalase-peroxidase (726 aa).

The tract at residues 1-33 (MSTSDDIHNTTATGKCPFHQGGHDQSAGGGTTT) is disordered. The tryptophyl-tyrosyl-methioninium (Trp-Tyr) (with M-252) cross-link spans 105 to 226 (WHGAGTYRSI…LGATEMGLIY (122 aa)). The active-site Proton acceptor is the histidine 106. Residues 226–252 (YVNPEGPDHSGEPLSAAAAIRATFGNM) constitute a cross-link (tryptophyl-tyrosyl-methioninium (Tyr-Met) (with W-105)). Histidine 267 is a heme b binding site.

The protein belongs to the peroxidase family. Peroxidase/catalase subfamily. Homodimer or homotetramer. Requires heme b as cofactor. In terms of processing, formation of the three residue Trp-Tyr-Met cross-link is important for the catalase, but not the peroxidase activity of the enzyme.

The catalysed reaction is H2O2 + AH2 = A + 2 H2O. It carries out the reaction 2 H2O2 = O2 + 2 H2O. In terms of biological role, bifunctional enzyme with both catalase and broad-spectrum peroxidase activity. The polypeptide is Catalase-peroxidase (Escherichia coli (strain UTI89 / UPEC)).